The primary structure comprises 325 residues: NADH-ubiquinone oxidoreductase chain 1 (325 aa).

Helical transmembrane passes span 5-25 (VPAE…FLVL), 79-99 (VATF…YGMV), 105-125 (IGLL…IIAG), 144-164 (MVPY…CVGS), 177-197 (IWSG…RLAE), 237-257 (ILMS…ILDL), 263-283 (IPGS…YIWV), and 302-322 (VFLP…VTFQ).

It belongs to the complex I subunit 1 family.

The protein localises to the mitochondrion inner membrane. It catalyses the reaction a ubiquinone + NADH + 5 H(+)(in) = a ubiquinol + NAD(+) + 4 H(+)(out). Its function is as follows. Core subunit of the mitochondrial membrane respiratory chain NADH dehydrogenase (Complex I) that is believed to belong to the minimal assembly required for catalysis. Complex I functions in the transfer of electrons from NADH to the respiratory chain. The immediate electron acceptor for the enzyme is believed to be ubiquinone. In Petunia hybrida (Petunia), this protein is NADH-ubiquinone oxidoreductase chain 1 (ND1).